Reading from the N-terminus, the 174-residue chain is ATP synthase subunit d, mitochondrial (174 aa).

Ser-2 is modified (N-acetylserine).

It belongs to the ATPase d subunit family. As to quaternary structure, F-type ATPases have 2 components, CF(1) - the catalytic core - and CF(0) - the membrane proton channel. In yeast, the dimeric form of ATP synthase consists of 17 polypeptides: alpha, beta, gamma, delta, epsilon, 4 (B), 5 (OSCP), 6 (A), 8, 9 (C), d, E (Tim11), f, g, h, i/j and k.

The protein localises to the mitochondrion. Its subcellular location is the mitochondrion inner membrane. Its function is as follows. Mitochondrial membrane ATP synthase (F(1)F(0) ATP synthase or Complex V) produces ATP from ADP in the presence of a proton gradient across the membrane which is generated by electron transport complexes of the respiratory chain. F-type ATPases consist of two structural domains, F(1) - containing the extramembraneous catalytic core, and F(0) - containing the membrane proton channel, linked together by a central stalk and a peripheral stalk. During catalysis, ATP synthesis in the catalytic domain of F(1) is coupled via a rotary mechanism of the central stalk subunits to proton translocation. Part of the complex F(0) domain and the peripheric stalk, which acts as a stator to hold the catalytic alpha(3)beta(3) subcomplex and subunit a/ATP6 static relative to the rotary elements. This is ATP synthase subunit d, mitochondrial (ATP7) from Saccharomyces cerevisiae (strain ATCC 204508 / S288c) (Baker's yeast).